A 228-amino-acid polypeptide reads, in one-letter code: Cytochrome c oxidase subunit 2 (228 aa).

Topologically, residues 1–26 (MATWANLGLQDSSSPLMEQLNFFHDH) are mitochondrial intermembrane. Residues 27–47 (TLLILTMITILVGYIMGMLMF) form a helical membrane-spanning segment. The Mitochondrial matrix portion of the chain corresponds to 48-60 (NQFTNRYLLHGQT). Residues 61-81 (IEIIWTVLPAIILMFIALPSL) form a helical membrane-spanning segment. The Mitochondrial intermembrane segment spans residues 82–228 (RLLYLMDEIN…FIKWITNMTN (147 aa)). Positions 161, 196, 198, 200, 204, and 207 each coordinate Cu cation. Glu-198 contacts Mg(2+).

It belongs to the cytochrome c oxidase subunit 2 family. In terms of assembly, component of the cytochrome c oxidase (complex IV, CIV), a multisubunit enzyme composed of a catalytic core of 3 subunits and several supernumerary subunits. The complex exists as a monomer or a dimer and forms supercomplexes (SCs) in the inner mitochondrial membrane with ubiquinol-cytochrome c oxidoreductase (cytochrome b-c1 complex, complex III, CIII). The cofactor is Cu cation.

Its subcellular location is the mitochondrion inner membrane. It carries out the reaction 4 Fe(II)-[cytochrome c] + O2 + 8 H(+)(in) = 4 Fe(III)-[cytochrome c] + 2 H2O + 4 H(+)(out). Its function is as follows. Component of the cytochrome c oxidase, the last enzyme in the mitochondrial electron transport chain which drives oxidative phosphorylation. The respiratory chain contains 3 multisubunit complexes succinate dehydrogenase (complex II, CII), ubiquinol-cytochrome c oxidoreductase (cytochrome b-c1 complex, complex III, CIII) and cytochrome c oxidase (complex IV, CIV), that cooperate to transfer electrons derived from NADH and succinate to molecular oxygen, creating an electrochemical gradient over the inner membrane that drives transmembrane transport and the ATP synthase. Cytochrome c oxidase is the component of the respiratory chain that catalyzes the reduction of oxygen to water. Electrons originating from reduced cytochrome c in the intermembrane space (IMS) are transferred via the dinuclear copper A center (CU(A)) of subunit 2 and heme A of subunit 1 to the active site in subunit 1, a binuclear center (BNC) formed by heme A3 and copper B (CU(B)). The BNC reduces molecular oxygen to 2 water molecules using 4 electrons from cytochrome c in the IMS and 4 protons from the mitochondrial matrix. The polypeptide is Cytochrome c oxidase subunit 2 (COXII) (Anopheles quadrimaculatus (Common malaria mosquito)).